A 179-amino-acid chain; its full sequence is Large ribosomal subunit protein uL5 (179 aa).

The protein belongs to the universal ribosomal protein uL5 family. In terms of assembly, part of the 50S ribosomal subunit; part of the 5S rRNA/L5/L18/L25 subcomplex. Contacts the 5S rRNA and the P site tRNA. Forms a bridge to the 30S subunit in the 70S ribosome.

Functionally, this is one of the proteins that bind and probably mediate the attachment of the 5S RNA into the large ribosomal subunit, where it forms part of the central protuberance. In the 70S ribosome it contacts protein S13 of the 30S subunit (bridge B1b), connecting the 2 subunits; this bridge is implicated in subunit movement. Contacts the P site tRNA; the 5S rRNA and some of its associated proteins might help stabilize positioning of ribosome-bound tRNAs. The sequence is that of Large ribosomal subunit protein uL5 from Alkalilimnicola ehrlichii (strain ATCC BAA-1101 / DSM 17681 / MLHE-1).